Consider the following 292-residue polypeptide: Medium chain reductase/dehydrogenase ucsI (292 aa).

Cys-43 contacts Zn(2+). Tyr-49 lines the substrate pocket. The Zn(2+) site is built by His-65 and Glu-66. Residues 184-189 (GCGPVG), Asp-208, Arg-213, and 276-278 (IGA) each bind NAD(+).

It belongs to the zinc-containing alcohol dehydrogenase family. Requires Zn(2+) as cofactor.

It functions in the pathway mycotoxin biosynthesis. In terms of biological role, medium chain reductase/dehydrogenase; part of the gene cluster that mediates the biosynthesis of UCS1025A, a member of the pyrrolizidinone family that acts as a strong telomerase inhibitor and displays potent antibacterial and antitumor properties. These compounds share a hemiaminal-containing pyrrolizidinone core fused with a gamma-lactone, giving a furopyrrolizidine that is connected to a decalin fragment. The polyketide synthase module (PKS) of the PKS-NRPS ucsA is responsible for the synthesis of the polyketide backbone via the condensation of an acetyl-CoA starter unit with 6 malonyl-CoA units. The downstream nonribosomal peptide synthetase (NRPS) module then amidates the carboxyl end of the polyketide with a 2S,3S-methylproline derived from L-isoleucine by the 2-oxoglutarate-dependent dioxygenase ucsF which converts L-isoleucine to (4S,5S)-4-methylpyrroline-5-carboxylate that is further converted to 2S,3S-methylproline by the pyrroline-5-carboxylate reductase ucsG. Reductive release of the completed aminoacyl polyketide from the assembly line can form the 3-pyrrolin-2-one structure via an intramolecular Knoevenagel reaction. Because ucsA lacks a designated enoylreductase (ER) domain, the required activity is provided the enoyl reductase ucsL. This keto acyclic precursor is the substrate of the Diels-Alderase ucsH, that catalyzes the Diels-Alder cycloaddition. Oxidation of the 3S-methyl group to a carboxylate by the cytochrome P450 monooxygenase ucsK allows an oxa-Michael cyclization that might involve the reductase/dehydrogenase ucsI and which furnishes the furopyrrolizidine. The oxidase ucsJ likely plays a critical role in stereoselective reduction of the C5-C6 double bond to afford the required R-configured carboxylate group. Further enolization and oxidation at C5 by an unidentified enzyme affords the last intermediate that can undergo oxa-Michael cyclization to yield UCS1025A. This is Medium chain reductase/dehydrogenase ucsI from Acremonium sp.